The chain runs to 362 residues: GTP cyclohydrolase FolE2 (362 aa).

This sequence belongs to the GTP cyclohydrolase IV family.

The enzyme catalyses GTP + H2O = 7,8-dihydroneopterin 3'-triphosphate + formate + H(+). Its pathway is cofactor biosynthesis; 7,8-dihydroneopterin triphosphate biosynthesis; 7,8-dihydroneopterin triphosphate from GTP: step 1/1. Functionally, converts GTP to 7,8-dihydroneopterin triphosphate. The sequence is that of GTP cyclohydrolase FolE2 from Jannaschia sp. (strain CCS1).